A 101-amino-acid chain; its full sequence is A-type ATP synthase subunit F (101 aa).

It belongs to the V-ATPase F subunit family. As to quaternary structure, has multiple subunits with at least A(3), B(3), C, D, E, F, H, I and proteolipid K(x).

The protein localises to the cell membrane. Its function is as follows. Component of the A-type ATP synthase that produces ATP from ADP in the presence of a proton gradient across the membrane. In Methanosarcina acetivorans (strain ATCC 35395 / DSM 2834 / JCM 12185 / C2A), this protein is A-type ATP synthase subunit F.